Consider the following 397-residue polypeptide: Serpin B10 (397 aa).

Residues 74 to 77 carry the Nuclear localization signal motif; it reads KKRK.

It belongs to the serpin family. Ov-serpin subfamily.

The protein localises to the nucleus. Its subcellular location is the cytoplasm. Its function is as follows. Protease inhibitor that may play a role in the regulation of protease activities during hematopoiesis and apoptosis induced by TNF. May regulate protease activities in the cytoplasm and in the nucleus. The chain is Serpin B10 (SERPINB10) from Otolemur garnettii (Small-eared galago).